A 601-amino-acid chain; its full sequence is Tubulin polyglutamylase ttll-4 (601 aa).

Residues 1–18 (MSSGYSSAPSVSHTSSDT) show a composition bias toward polar residues. The disordered stretch occupies residues 1-37 (MSSGYSSAPSVSHTSSDTDLNRIDSYDDGAEETTDEQ). The 339-residue stretch at 138–476 (QARLTWCHNS…YVPPSFDKLS (339 aa)) folds into the TTL domain. Residues lysine 254, 260-261 (RG), 282-285 (QHYI), and 295-297 (KFD) each bind ATP. Arginine 260 lines the a protein pocket. Arginine 321 provides a ligand contact to L-glutamate. 342–343 (TN) contributes to the ATP binding site. L-glutamate-binding residues include tyrosine 344, serine 345, and lysine 362. 3 residues coordinate Mg(2+): aspartate 422, glutamate 435, and asparagine 437. Position 453 (lysine 453) interacts with L-glutamate.

The protein belongs to the tubulin--tyrosine ligase family. The cofactor is Mg(2+). Expressed in many sensory neurons in amphid.

It catalyses the reaction L-glutamyl-[protein] + L-glutamate + ATP = gamma-L-glutamyl-L-glutamyl-[protein] + ADP + phosphate + H(+). Monoglutamylase which modifies tubulin, adding a single glutamate on the gamma-carboxyl group of specific glutamate residues of target proteins. Involved in the side-chain initiation step of the polyglutamylation reaction but not in the elongation step. Preferentially modifies beta-tail tubulin over the alpha-tubulin. Involved in side-chain glutamylation of tubulin in sensory cilia. Together with ttll-5 and ttll-11, required for male mating. In Caenorhabditis elegans, this protein is Tubulin polyglutamylase ttll-4.